We begin with the raw amino-acid sequence, 309 residues long: Ornithine carbamoyltransferase (309 aa).

Residues 51-54 (STRT), Q78, R102, and 129-132 (HPCQ) contribute to the carbamoyl phosphate site. L-ornithine-binding positions include N161, D225, and 229–230 (SM). Residues 265-266 (CL) and R293 contribute to the carbamoyl phosphate site.

Belongs to the aspartate/ornithine carbamoyltransferase superfamily. OTCase family.

The protein localises to the cytoplasm. The catalysed reaction is carbamoyl phosphate + L-ornithine = L-citrulline + phosphate + H(+). Its pathway is amino-acid biosynthesis; L-arginine biosynthesis; L-arginine from L-ornithine and carbamoyl phosphate: step 1/3. In terms of biological role, reversibly catalyzes the transfer of the carbamoyl group from carbamoyl phosphate (CP) to the N(epsilon) atom of ornithine (ORN) to produce L-citrulline. This Mycolicibacterium paratuberculosis (strain ATCC BAA-968 / K-10) (Mycobacterium paratuberculosis) protein is Ornithine carbamoyltransferase.